A 474-amino-acid polypeptide reads, in one-letter code: tRNA-2-methylthio-N(6)-dimethylallyladenosine synthase (474 aa).

Residues 3–120 enclose the MTTase N-terminal domain; the sequence is KKLHIKTWGC…LPEMINAVRG (118 aa). Residues cysteine 12, cysteine 49, cysteine 83, cysteine 157, cysteine 161, and cysteine 164 each coordinate [4Fe-4S] cluster. The region spanning 143–375 is the Radical SAM core domain; it reads RADGPTAFVS…QERINQQAMA (233 aa). In terms of domain architecture, TRAM spans 378–441; it reads RRMLGTVQRI…TNSLRGKIVR (64 aa).

Belongs to the methylthiotransferase family. MiaB subfamily. As to quaternary structure, monomer. [4Fe-4S] cluster serves as cofactor.

Its subcellular location is the cytoplasm. It catalyses the reaction N(6)-dimethylallyladenosine(37) in tRNA + (sulfur carrier)-SH + AH2 + 2 S-adenosyl-L-methionine = 2-methylsulfanyl-N(6)-dimethylallyladenosine(37) in tRNA + (sulfur carrier)-H + 5'-deoxyadenosine + L-methionine + A + S-adenosyl-L-homocysteine + 2 H(+). Functionally, catalyzes the methylthiolation of N6-(dimethylallyl)adenosine (i(6)A), leading to the formation of 2-methylthio-N6-(dimethylallyl)adenosine (ms(2)i(6)A) at position 37 in tRNAs that read codons beginning with uridine. This Klebsiella pneumoniae (strain 342) protein is tRNA-2-methylthio-N(6)-dimethylallyladenosine synthase.